A 316-amino-acid chain; its full sequence is 4-hydroxy-3-methylbut-2-enyl diphosphate reductase (316 aa).

C12 is a binding site for [4Fe-4S] cluster. H41 and H74 together coordinate (2E)-4-hydroxy-3-methylbut-2-enyl diphosphate. Dimethylallyl diphosphate is bound by residues H41 and H74. Residues H41 and H74 each coordinate isopentenyl diphosphate. C96 contributes to the [4Fe-4S] cluster binding site. H124 is a (2E)-4-hydroxy-3-methylbut-2-enyl diphosphate binding site. Position 124 (H124) interacts with dimethylallyl diphosphate. Residue H124 participates in isopentenyl diphosphate binding. The active-site Proton donor is the E126. T169 is a (2E)-4-hydroxy-3-methylbut-2-enyl diphosphate binding site. A [4Fe-4S] cluster-binding site is contributed by C199. (2E)-4-hydroxy-3-methylbut-2-enyl diphosphate is bound by residues S227, S228, N229, and S271. Dimethylallyl diphosphate contacts are provided by S227, S228, N229, and S271. S227, S228, N229, and S271 together coordinate isopentenyl diphosphate.

It belongs to the IspH family. [4Fe-4S] cluster serves as cofactor.

The enzyme catalyses isopentenyl diphosphate + 2 oxidized [2Fe-2S]-[ferredoxin] + H2O = (2E)-4-hydroxy-3-methylbut-2-enyl diphosphate + 2 reduced [2Fe-2S]-[ferredoxin] + 2 H(+). It carries out the reaction dimethylallyl diphosphate + 2 oxidized [2Fe-2S]-[ferredoxin] + H2O = (2E)-4-hydroxy-3-methylbut-2-enyl diphosphate + 2 reduced [2Fe-2S]-[ferredoxin] + 2 H(+). It participates in isoprenoid biosynthesis; dimethylallyl diphosphate biosynthesis; dimethylallyl diphosphate from (2E)-4-hydroxy-3-methylbutenyl diphosphate: step 1/1. It functions in the pathway isoprenoid biosynthesis; isopentenyl diphosphate biosynthesis via DXP pathway; isopentenyl diphosphate from 1-deoxy-D-xylulose 5-phosphate: step 6/6. In terms of biological role, catalyzes the conversion of 1-hydroxy-2-methyl-2-(E)-butenyl 4-diphosphate (HMBPP) into a mixture of isopentenyl diphosphate (IPP) and dimethylallyl diphosphate (DMAPP). Acts in the terminal step of the DOXP/MEP pathway for isoprenoid precursor biosynthesis. The protein is 4-hydroxy-3-methylbut-2-enyl diphosphate reductase of Stenotrophomonas maltophilia (strain R551-3).